Reading from the N-terminus, the 478-residue chain is Bifunctional protein HldE (478 aa).

The tract at residues Met-1–Ser-318 is ribokinase. Position 195–198 (Asn-195–Glu-198) interacts with ATP. The active site involves Asp-264. Positions Met-344–Asn-478 are cytidylyltransferase.

This sequence in the N-terminal section; belongs to the carbohydrate kinase PfkB family. It in the C-terminal section; belongs to the cytidylyltransferase family. Homodimer.

It catalyses the reaction D-glycero-beta-D-manno-heptose 7-phosphate + ATP = D-glycero-beta-D-manno-heptose 1,7-bisphosphate + ADP + H(+). The catalysed reaction is D-glycero-beta-D-manno-heptose 1-phosphate + ATP + H(+) = ADP-D-glycero-beta-D-manno-heptose + diphosphate. Its pathway is nucleotide-sugar biosynthesis; ADP-L-glycero-beta-D-manno-heptose biosynthesis; ADP-L-glycero-beta-D-manno-heptose from D-glycero-beta-D-manno-heptose 7-phosphate: step 1/4. It functions in the pathway nucleotide-sugar biosynthesis; ADP-L-glycero-beta-D-manno-heptose biosynthesis; ADP-L-glycero-beta-D-manno-heptose from D-glycero-beta-D-manno-heptose 7-phosphate: step 3/4. Its function is as follows. Catalyzes the phosphorylation of D-glycero-D-manno-heptose 7-phosphate at the C-1 position to selectively form D-glycero-beta-D-manno-heptose-1,7-bisphosphate. Functionally, catalyzes the ADP transfer from ATP to D-glycero-beta-D-manno-heptose 1-phosphate, yielding ADP-D-glycero-beta-D-manno-heptose. This Erwinia tasmaniensis (strain DSM 17950 / CFBP 7177 / CIP 109463 / NCPPB 4357 / Et1/99) protein is Bifunctional protein HldE.